The following is a 110-amino-acid chain: Large ribosomal subunit protein bL20 (110 aa).

Belongs to the bacterial ribosomal protein bL20 family.

In terms of biological role, binds directly to 23S ribosomal RNA and is necessary for the in vitro assembly process of the 50S ribosomal subunit. It is not involved in the protein synthesizing functions of that subunit. This Shigella boydii serotype 4 (strain Sb227) protein is Large ribosomal subunit protein bL20.